A 28-amino-acid chain; its full sequence is Nicotinic acetylcholine receptor-binding protein Mnn-3C (28 aa).

Cys-3 and Cys-24 form a disulfide bridge.

It belongs to the three-finger toxin family. Short-chain subfamily. Expressed by the venom gland.

The protein resides in the secreted. In terms of biological role, binds and may inhibit nicotinic acetylcholine receptors (nAChR). This Micrurus nigrocinctus (Central American coral snake) protein is Nicotinic acetylcholine receptor-binding protein Mnn-3C.